The sequence spans 98 residues: Large ribosomal subunit protein uL23 (98 aa).

It belongs to the universal ribosomal protein uL23 family. Part of the 50S ribosomal subunit. Contacts protein L29, and trigger factor when it is bound to the ribosome.

One of the early assembly proteins it binds 23S rRNA. One of the proteins that surrounds the polypeptide exit tunnel on the outside of the ribosome. Forms the main docking site for trigger factor binding to the ribosome. This Chromohalobacter salexigens (strain ATCC BAA-138 / DSM 3043 / CIP 106854 / NCIMB 13768 / 1H11) protein is Large ribosomal subunit protein uL23.